A 310-amino-acid polypeptide reads, in one-letter code: Homoserine kinase (310 aa).

91–101 (PIGSGLGSSAC) is an ATP binding site.

This sequence belongs to the GHMP kinase family. Homoserine kinase subfamily.

The protein localises to the cytoplasm. The catalysed reaction is L-homoserine + ATP = O-phospho-L-homoserine + ADP + H(+). It participates in amino-acid biosynthesis; L-threonine biosynthesis; L-threonine from L-aspartate: step 4/5. Its function is as follows. Catalyzes the ATP-dependent phosphorylation of L-homoserine to L-homoserine phosphate. In Escherichia coli O17:K52:H18 (strain UMN026 / ExPEC), this protein is Homoserine kinase.